The sequence spans 420 residues: UDP-N-acetylglucosamine 1-carboxyvinyltransferase (420 aa).

22–23 (KN) contributes to the phosphoenolpyruvate binding site. Residue Arg-92 coordinates UDP-N-acetyl-alpha-D-glucosamine. Cys-116 acts as the Proton donor in catalysis. Cys-116 carries the post-translational modification 2-(S-cysteinyl)pyruvic acid O-phosphothioketal. UDP-N-acetyl-alpha-D-glucosamine is bound by residues 121-125 (RPVDQ), Asp-304, and Ile-326.

This sequence belongs to the EPSP synthase family. MurA subfamily.

Its subcellular location is the cytoplasm. It catalyses the reaction phosphoenolpyruvate + UDP-N-acetyl-alpha-D-glucosamine = UDP-N-acetyl-3-O-(1-carboxyvinyl)-alpha-D-glucosamine + phosphate. It participates in cell wall biogenesis; peptidoglycan biosynthesis. In terms of biological role, cell wall formation. Adds enolpyruvyl to UDP-N-acetylglucosamine. The protein is UDP-N-acetylglucosamine 1-carboxyvinyltransferase of Paraburkholderia phymatum (strain DSM 17167 / CIP 108236 / LMG 21445 / STM815) (Burkholderia phymatum).